A 723-amino-acid polypeptide reads, in one-letter code: Methionine--tRNA ligase (723 aa).

A 'HIGH' region motif is present at residues 12-22 (PYANGDIHLGH). Positions 143, 146, 156, and 159 each coordinate Zn(2+). The 'KMSKS' region signature appears at 345–349 (KMSKS). Residue Lys-348 coordinates ATP. Residues 568 to 604 (PAAATAPAKDAKPAKEAGSQQRHAEKQQHAAGVSETA) are disordered. The 112-residue stretch at 612–723 (DFTKVDLRIA…EGAQAGMRVK (112 aa)) folds into the tRNA-binding domain.

It belongs to the class-I aminoacyl-tRNA synthetase family. MetG type 1 subfamily. Homodimer. Zn(2+) is required as a cofactor.

The protein resides in the cytoplasm. The catalysed reaction is tRNA(Met) + L-methionine + ATP = L-methionyl-tRNA(Met) + AMP + diphosphate. Functionally, is required not only for elongation of protein synthesis but also for the initiation of all mRNA translation through initiator tRNA(fMet) aminoacylation. The chain is Methionine--tRNA ligase from Azoarcus sp. (strain BH72).